Reading from the N-terminus, the 240-residue chain is DNA repair protein RecO (240 aa).

The protein belongs to the RecO family.

Its function is as follows. Involved in DNA repair and RecF pathway recombination. This is DNA repair protein RecO from Xanthomonas euvesicatoria pv. vesicatoria (strain 85-10) (Xanthomonas campestris pv. vesicatoria).